A 420-amino-acid polypeptide reads, in one-letter code: MAKELQKWVVMVTAQTPTNIAVIKYWGKRDETLILPINDSISVTLDPDHLCTTTTVSVSPSFEQDRMWLNGKEISLLGGRFQSCLREIRSRACDLEDEKKGIKIKKMDWEKLRLHIASYNNFPTAAGLASSAAGLACFVFALAKLMNLNEDNGQLSAIARRGSGSACRSLYGGFVKWIMGKEENGSDSIAFQLADEKHWDDLVIVIAVVSARQKETSSTTGMQDSCKTSMLIQHRAKEVVPKRIIQMEDAIEKRDFPSFARLACADSNQFHAVCLDTSPPIFYMNDTSHKIISCVEKWNRSVGTPQVAYTFDAGPNAVLIARDRKIAALLLRRLLFHFPPTFQHCLNSYVIGDKSILQDVGVQDMKDIESLPPPPEIKDNIPAQKSNGDVSYFICTRPGRGPVLLPDSGALLNPETGLPK.

(R)-5-diphosphomevalonate is bound at residue 25–28 (YWGK). The Peroxisomal targeting signal PTS2 motif lies at 42-50 (SVTLDPDHL). (R)-5-diphosphomevalonate is bound by residues R80, 163–168 (SGSACR), and T219.

The protein belongs to the diphosphomevalonate decarboxylase family. As to quaternary structure, homodimer.

It localises to the peroxisome. The enzyme catalyses (R)-5-diphosphomevalonate + ATP = isopentenyl diphosphate + ADP + phosphate + CO2. It participates in isoprenoid biosynthesis; isopentenyl diphosphate biosynthesis via mevalonate pathway; isopentenyl diphosphate from (R)-mevalonate: step 3/3. Its function is as follows. Performs the first committed step in the biosynthesis of isoprene-containing compounds such as sterols and terpenoids. Component of the triterpenes (e.g. ginsenosides or panaxosides) and phytosterols biosynthetic pathways. Promotes the accumulation of stigmasterol and beta-sitosterol. The polypeptide is Diphosphomevalonate decarboxylase 2 (Panax ginseng (Korean ginseng)).